The primary structure comprises 319 residues: 3'-5' exoribonuclease YhaM (319 aa).

The segment at residues 12–90 (EAVDGYLLIK…QLKIASIRPT (79 aa)) is a DNA-binding region (OB). The HD domain occupies 163–279 (HVVSMLRIGK…LHLIDNIDAK (117 aa)).

This sequence belongs to the YhaM family.

In terms of biological role, shows a 3'-5' exoribonuclease activity. The chain is 3'-5' exoribonuclease YhaM from Shouchella clausii (strain KSM-K16) (Alkalihalobacillus clausii).